The chain runs to 148 residues: Multiprotein-bridging factor 1c (148 aa).

An HTH cro/C1-type domain is found at 91-145 (IQKARLEKKMSQADLAKQINERTQVVQEYENGKAVPNQAVLAKMEKVLGVKLRGK). Residues 102 to 121 (QADLAKQINERTQVVQEYEN) constitute a DNA-binding region (H-T-H motif).

Belongs to the MBF1 family. As to quaternary structure, binds to TPS5. Expressed in leaves, roots, stems, flowers, siliques and shoots. Not detected in seeds.

The protein resides in the nucleus. It is found in the nucleolus. The protein localises to the cytoplasm. Functionally, transcriptional coactivator that stimulates transcriptional activity by bridging regulatory proteins and TBP, thereby recruiting TBP to promoters occupied by DNA-binding regulators. Involved in the tolerance to heat and osmotic stress by partially activating the ethylene-response signal transduction pathway. This Arabidopsis thaliana (Mouse-ear cress) protein is Multiprotein-bridging factor 1c (MBF1C).